The following is a 204-amino-acid chain: Ribosomal RNA small subunit methyltransferase G (204 aa).

Residues glycine 76, leucine 81, 127-128 (IE), and arginine 140 each bind S-adenosyl-L-methionine.

Belongs to the methyltransferase superfamily. RNA methyltransferase RsmG family.

The protein localises to the cytoplasm. The enzyme catalyses guanosine(527) in 16S rRNA + S-adenosyl-L-methionine = N(7)-methylguanosine(527) in 16S rRNA + S-adenosyl-L-homocysteine. Its function is as follows. Specifically methylates the N7 position of guanine in position 527 of 16S rRNA. The protein is Ribosomal RNA small subunit methyltransferase G of Francisella philomiragia subsp. philomiragia (strain ATCC 25017 / CCUG 19701 / FSC 153 / O#319-036).